Reading from the N-terminus, the 118-residue chain is Large ribosomal subunit protein bL19 (118 aa).

This sequence belongs to the bacterial ribosomal protein bL19 family.

Its function is as follows. This protein is located at the 30S-50S ribosomal subunit interface and may play a role in the structure and function of the aminoacyl-tRNA binding site. The sequence is that of Large ribosomal subunit protein bL19 from Beutenbergia cavernae (strain ATCC BAA-8 / DSM 12333 / CCUG 43141 / JCM 11478 / NBRC 16432 / NCIMB 13614 / HKI 0122).